A 114-amino-acid polypeptide reads, in one-letter code: Dolichyl-diphosphooligosaccharide--protein glycosyltransferase subunit DAD2 (114 aa).

At 1–30 the chain is on the cytoplasmic side; that stretch reads MPKAAGDAKLLIQSLNKAYAATPTNLKIID. The chain crosses the membrane as a helical span at residues 31-51; it reads LYVVFAVATALVQVVYMGIVG. Topologically, residues 52–54 are lumenal; sequence SFP. The helical transmembrane segment at 55–75 threads the bilayer; sequence FNSFLSGVLSSIGTAVLGVCL. Residues 76–93 are Cytoplasmic-facing; the sequence is RIQVNKDNKEFKDLPPER. The helical transmembrane segment at 94–114 threads the bilayer; the sequence is AFADFVLCNLVLHLVIMNFLG.

Belongs to the DAD/OST2 family. Component of the oligosaccharyltransferase (OST) complex.

The protein localises to the endoplasmic reticulum membrane. It participates in protein modification; protein glycosylation. In terms of biological role, subunit of the oligosaccharyl transferase (OST) complex that catalyzes the initial transfer of a defined glycan (Glc(3)Man(9)GlcNAc(2) in eukaryotes) from the lipid carrier dolichol-pyrophosphate to an asparagine residue within an Asn-X-Ser/Thr consensus motif in nascent polypeptide chains, the first step in protein N-glycosylation. N-glycosylation occurs cotranslationally and the complex associates with the Sec61 complex at the channel-forming translocon complex that mediates protein translocation across the endoplasmic reticulum (ER). All subunits are required for a maximal enzyme activity. The chain is Dolichyl-diphosphooligosaccharide--protein glycosyltransferase subunit DAD2 (DAD2) from Hordeum vulgare (Barley).